The following is a 349-amino-acid chain: MGQQHGTRNGLTHRELPRGVGLLLAMALMNVALYLCLDQLFISPGRSTADSRRCPPGYFRMGRMRNCSRWLSCEELRTEVRQLKRVGEGAVKRVFLSEWKEHKVALSRLTRLEMKEDFLHGLQMLKSLQSEHVVTLVGYCEEDGTILTEYHPLGSLSNLEETLNLSKYQDVNTWQHRLQLAMEYVSIINYLHHSPLGTRVMCDSNDLPKTLSQYLLTSNFSIVANDLDALPLVDHDSGVLIKCGHRELHGDFVAPEQLWPYGEDTPFQDDLMPSYNEKVDIWKIPDVSSFLLGHVEGSDMVRFHLFDIHKACKSQIPAERPTAQNVLDAYQRVFHSLRDTVMSQTKEML.

The Cytoplasmic portion of the chain corresponds to methionine 1–glycine 19. A helical; Signal-anchor for type II membrane protein membrane pass occupies residues valine 20–isoleucine 42. Over serine 43–leucine 349 the chain is Lumenal. Asparagine 66, asparagine 164, and asparagine 219 each carry an N-linked (GlcNAc...) asparagine glycan. The Protein kinase domain maps to valine 80–leucine 349.

The protein belongs to the protein kinase superfamily. Ser/Thr protein kinase family. STKL subfamily.

It is found in the endoplasmic reticulum membrane. The enzyme catalyses 3-O-[beta-D-GalNAc-(1-&gt;3)-beta-D-GlcNAc-(1-&gt;4)-alpha-D-Man]-L-Thr-[protein] + ATP = 3-O-[beta-D-GalNAc-(1-&gt;3)-beta-D-GlcNAc-(1-&gt;4)-(O-6-P-alpha-D-Man)]-Thr-[protein] + ADP + H(+). Functionally, protein O-mannose kinase that specifically mediates phosphorylation at the 6-position of an O-mannose of the trisaccharide (N-acetylgalactosamine (GalNAc)-beta-1,3-N-acetylglucosamine (GlcNAc)-beta-1,4-mannose) to generate phosphorylated O-mannosyl trisaccharide (N-acetylgalactosamine-beta-1,3-N-acetylglucosamine-beta-1,4-(phosphate-6-)mannose). Phosphorylated O-mannosyl trisaccharide is a carbohydrate structure present in alpha-dystroglycan (DAG1), which is required for binding laminin G-like domain-containing extracellular proteins with high affinity. Only shows kinase activity when the GalNAc-beta-3-GlcNAc-beta-terminus is linked to the 4-position of O-mannose, suggesting that this disaccharide serves as the substrate recognition motif. This Mus musculus (Mouse) protein is Protein O-mannose kinase (Pomk).